The primary structure comprises 210 residues: FMN-dependent NADH:quinone oxidoreductase (210 aa).

Residues S10 and 16–18 (SRS) each bind FMN.

It belongs to the azoreductase type 1 family. In terms of assembly, homodimer. It depends on FMN as a cofactor.

The catalysed reaction is 2 a quinone + NADH + H(+) = 2 a 1,4-benzosemiquinone + NAD(+). It catalyses the reaction N,N-dimethyl-1,4-phenylenediamine + anthranilate + 2 NAD(+) = 2-(4-dimethylaminophenyl)diazenylbenzoate + 2 NADH + 2 H(+). In terms of biological role, quinone reductase that provides resistance to thiol-specific stress caused by electrophilic quinones. Its function is as follows. Also exhibits azoreductase activity. Catalyzes the reductive cleavage of the azo bond in aromatic azo compounds to the corresponding amines. This is FMN-dependent NADH:quinone oxidoreductase from Kineococcus radiotolerans (strain ATCC BAA-149 / DSM 14245 / SRS30216).